Here is an 88-residue protein sequence, read N- to C-terminus: Small ribosomal subunit protein uS15 (88 aa).

Belongs to the universal ribosomal protein uS15 family. In terms of assembly, part of the 30S ribosomal subunit. Forms a bridge to the 50S subunit in the 70S ribosome, contacting the 23S rRNA.

One of the primary rRNA binding proteins, it binds directly to 16S rRNA where it helps nucleate assembly of the platform of the 30S subunit by binding and bridging several RNA helices of the 16S rRNA. Functionally, forms an intersubunit bridge (bridge B4) with the 23S rRNA of the 50S subunit in the ribosome. The polypeptide is Small ribosomal subunit protein uS15 (Methylacidiphilum infernorum (isolate V4) (Methylokorus infernorum (strain V4))).